A 268-amino-acid chain; its full sequence is Mediator of RNA polymerase II transcription subunit 18 (268 aa).

The interval 91–112 (APASPVADQDAHMSGTDEKSSV) is disordered. A compositionally biased stretch (basic and acidic residues) spans 99-112 (QDAHMSGTDEKSSV).

It belongs to the Mediator complex subunit 18 family. As to quaternary structure, component of the Mediator complex.

It is found in the nucleus. Functionally, component of the Mediator complex, a coactivator involved in the regulated transcription of nearly all RNA polymerase II-dependent genes. Mediator functions as a bridge to convey information from gene-specific regulatory proteins to the basal RNA polymerase II transcription machinery. Mediator is recruited to promoters by direct interactions with regulatory proteins and serves as a scaffold for the assembly of a functional preinitiation complex with RNA polymerase II and the general transcription factors. This chain is Mediator of RNA polymerase II transcription subunit 18 (srb5), found in Aspergillus fumigatus (strain ATCC MYA-4609 / CBS 101355 / FGSC A1100 / Af293) (Neosartorya fumigata).